Consider the following 292-residue polypeptide: 4'-phosphopantetheinyl transferase 1 (292 aa).

This sequence belongs to the P-Pant transferase superfamily.

It catalyses the reaction apo-[ACP] + CoA = holo-[ACP] + adenosine 3',5'-bisphosphate + H(+). Its function is as follows. Transfers the 4'-phosphopantetheine moiety from coenzyme A to a Ser of an acyl-carrier-protein. The enzyme is able to transfer the cofactor to a broad range of enzymes with acyl- or peptidyl-carrier protein domains. Required for primary biological processes such as growth and asexual/sexual development, and activates target enzymes involved in the synthesis of metabolites such as fatty acids, nonribosomal peptides and polyketides such as the gamma-pyrones fusapyrone (FPY) and deoxyfusapyrone (dFPY). The sequence is that of 4'-phosphopantetheinyl transferase 1 from Fusarium mangiferae (Mango malformation disease fungus).